A 62-amino-acid polypeptide reads, in one-letter code: uncharacterized protein (62 aa).

This is an uncharacterized protein from Invertebrate iridescent virus 6 (IIV-6).